The primary structure comprises 416 residues: Homeobox even-skipped homolog protein 1 (416 aa).

Disordered stretches follow at residues A30 to Y120 and Y138 to S178. A compositionally biased stretch (low complexity) spans G72–A82. The span at D102–D114 shows a compositional bias: polar residues. The segment at residues M183–R242 is a DNA-binding region (homeobox).

It belongs to the even-skipped homeobox family.

Its subcellular location is the nucleus. May play a role in the specification of neuronal cell types. May play a role in the dorsoventral specification of mesodermal cell fate. The sequence is that of Homeobox even-skipped homolog protein 1 (Evx1) from Mus musculus (Mouse).